Here is a 116-residue protein sequence, read N- to C-terminus: Class I hydrophobin 1 (116 aa).

The first 19 residues, 1–19, serve as a signal peptide directing secretion; sequence MLFKQAILVATTLTDLAVA. Cystine bridges form between cysteine 35–cysteine 95, cysteine 42–cysteine 89, cysteine 43–cysteine 76, and cysteine 96–cysteine 109. 2 N-linked (GlcNAc...) asparagine glycosylation sites follow: asparagine 44 and asparagine 100.

Belongs to the fungal hydrophobin family. Self-assembles to form functional amyloid fibrils called rodlets. Self-assembly into fibrillar rodlets occurs spontaneously at hydrophobic:hydrophilic interfaces and the rodlets further associate laterally to form amphipathic monolayers.

Its subcellular location is the secreted. The protein resides in the cell wall. Its function is as follows. Aerial growth, conidiation, and dispersal of filamentous fungi in the environment rely upon a capability of their secreting small amphipathic proteins called hydrophobins (HPBs) with low sequence identity. Class I can self-assemble into an outermost layer of rodlet bundles on aerial cell surfaces, conferring cellular hydrophobicity that supports fungal growth, development and dispersal; whereas Class II form highly ordered films at water-air interfaces through intermolecular interactions but contribute nothing to the rodlet structure. The sequence is that of Class I hydrophobin 1 from Pleurotus ostreatus (Oyster mushroom).